The chain runs to 236 residues: 2-C-methyl-D-erythritol 4-phosphate cytidylyltransferase (236 aa).

It belongs to the IspD/TarI cytidylyltransferase family. IspD subfamily. In terms of assembly, homodimer.

It carries out the reaction 2-C-methyl-D-erythritol 4-phosphate + CTP + H(+) = 4-CDP-2-C-methyl-D-erythritol + diphosphate. It participates in isoprenoid biosynthesis; isopentenyl diphosphate biosynthesis via DXP pathway; isopentenyl diphosphate from 1-deoxy-D-xylulose 5-phosphate: step 2/6. In terms of biological role, catalyzes the formation of 4-diphosphocytidyl-2-C-methyl-D-erythritol from CTP and 2-C-methyl-D-erythritol 4-phosphate (MEP). In Escherichia coli O127:H6 (strain E2348/69 / EPEC), this protein is 2-C-methyl-D-erythritol 4-phosphate cytidylyltransferase.